We begin with the raw amino-acid sequence, 610 residues long: UvrABC system protein C (610 aa).

Positions 16 to 94 (HQPGVYRMYN…IKQYLPKYNV (79 aa)) constitute a GIY-YIG domain. The region spanning 204–239 (QQVLKQLIEKMEVASQQLRFEDAAKFRDQIQAIRRV) is the UVR domain.

This sequence belongs to the UvrC family. In terms of assembly, interacts with UvrB in an incision complex.

The protein localises to the cytoplasm. Its function is as follows. The UvrABC repair system catalyzes the recognition and processing of DNA lesions. UvrC both incises the 5' and 3' sides of the lesion. The N-terminal half is responsible for the 3' incision and the C-terminal half is responsible for the 5' incision. This is UvrABC system protein C from Vibrio parahaemolyticus serotype O3:K6 (strain RIMD 2210633).